The primary structure comprises 188 residues: HTH-type transcriptional repressor AcnR (188 aa).

The region spanning Val10–Met70 is the HTH tetR-type domain. The segment at residues Thr33–Phe52 is a DNA-binding region (H-T-H motif). Residues Leu79–Val80, Arg130, and Asn134 contribute to the citrate site. Position 181 (Glu181) interacts with Mg(2+). Residue Arg185 coordinates citrate.

In terms of assembly, homodimer.

Functionally, acnR negatively controls the expression of the aconitase gene acn. The polypeptide is HTH-type transcriptional repressor AcnR (Corynebacterium efficiens (strain DSM 44549 / YS-314 / AJ 12310 / JCM 11189 / NBRC 100395)).